A 486-amino-acid chain; its full sequence is MDIFYDLIKWLVVLIYWLLIANITYRILIKRRSIPSSMSWLLTIYIIPFIGIAIWFFFGELYLGKRQKKIAKKIWSISNTYLNKLKSYKYIFQIKNSEVATSLFQLCKHRQGIYGIKNNKITLLTNTQNTIEVLIRDIYSARNNIEMVFYIWKPGGIADDVAMALIDSAKRGVHCRLMLDSAGSVEFFRSPWFDIMKKSGIEIVEALKVSLIRIFLRRLDVRQHRKIILIDNYISYSGSMNLVDPYLFKQSSGVGQWIDLMTRIEGPVATAIGIIYSCDWEIETGFKILPKLPNKEMLKKKCNQNSSIQVIASGPGFPKNVIHQALLTAIYSARNELIMTTPYLVPSDDLLHAICTAAQRGVKVSIIIPLYHDSILVKWASRVFFSELLEAGVKIYQFKKGLLHSKSILIDQQLSLIGTVNLDMRSLWLNFEITLVIDDRKFSHHLSAIQKEYIDNSRLLDKNTWSMRAYWTRILEKIFYFLSPLL.

The next 2 membrane-spanning stretches (helical) occupy residues 3-23 (IFYDLIKWLVVLIYWLLIANI) and 38-58 (MSWLLTIYIIPFIGIAIWFFF). PLD phosphodiesterase domains are found at residues 219–246 (LDVRQHRKIILIDNYISYSGSMNLVDPY) and 399–426 (KKGLLHSKSILIDQQLSLIGTVNLDMRS). Catalysis depends on residues H224, K226, D231, H404, K406, and D411.

It belongs to the phospholipase D family. Cardiolipin synthase subfamily. ClsA sub-subfamily.

The protein localises to the cell inner membrane. It carries out the reaction 2 a 1,2-diacyl-sn-glycero-3-phospho-(1'-sn-glycerol) = a cardiolipin + glycerol. Its function is as follows. Catalyzes the reversible phosphatidyl group transfer from one phosphatidylglycerol molecule to another to form cardiolipin (CL) (diphosphatidylglycerol) and glycerol. The polypeptide is Cardiolipin synthase A (Buchnera aphidicola subsp. Schizaphis graminum (strain Sg)).